The primary structure comprises 1088 residues: MTQEEEFMDEDVFINETLVSEDEESLILRDIEQRQALANRLSKWTRPPLSAGYVAQSRSVLFQQLEIDYVIAESHGELLPNSSGPVAIIRIFGVTKEGHSVCCNVHGFEPYFYICCPPGMGPDDISHFHQTLEGRMREANRNSNVGKFVRRIEMVQRRSIMYYQQSNSQPFLKIVVALPTMVASCRGILDRGIQLDGLGMKSFLTYESNVLFALRFMIDCNIVGGNWIGIPAGKYKKTAKSLSYCQLEFDCLYSELISHAPEGEYSKMAPFRILSFDIECAGRKGHFPEPTHDPVIQIANLVTLQGEDQPFIRNVMTLKSCSPIVGVDVMPFETEREVLLAWRDFIREVDPDIIIGYNICKFDLPYLIERALNLKIAEFPILGRIRNSRVRVKDTTFSSRQYGTRESKEVAVEGRVTFDLLQVMQRDYKLSSYSLNSVSSHFLSEQKEDVHHSIISDLQNGNAETRRRLAVYCLKDAYLPQRLLDKLMFIYNYVEMARVTGVPISFLLSRGQSIKVLSQLLRRARQKNLVIPNAKQAGSEQGTFEGATVLEARAGFYEKPIATLDFASLYPSIMMAYNLCYCTLVIPEDARKLNIPPESVNRTPSGETFVKSNLQKGILPEILEELLTARKRAKADLKEAKDPLEKAVLDGRQLALKISANSVYGFTGATIGQLPCLEISSSVTSYGRQMIEHTKKLVEDKFTTLNGYEHNAEVIYGDTDSVMVQFGVSAVEEAMNLGREAAEHISGTFTKPIKLEFEKVYYPYLLISKKRYAGLFWTKPDNFDKMDTKGIETVRRDNCLLVKNLVNDCLHKILIDRDIPGAVQYVKNAISDLLMNRMDLSLLVITKGLTKTGDDYEVKAAHVELAERMRKRDAATAPNVGDRVPYVIIKAAKGAKAYERSEDPIYVLENNIPIDPHYYLENQISKPILRIFEPILKNASKELLHGSHTRSISISTPSNSGILRFAKKQLPALVVKLYLARVITLSVHIAKEGRLSCTVKQYLKCLSWRCFLGGCGHSVRSAKVHFIRMFSAPVGIVQFSIDEKRHRKIWVKQSCNWTDGTSKFCQEFDLADLFEPMDTNTIWCLPQS.

This sequence belongs to the DNA polymerase type-B family. In terms of assembly, heterodimer with subunits of 125 kDa and 50 kDa. The 125 kDa subunit contains the polymerase active site and most likely the active site for the 3'-5' exonuclease activity.

The protein resides in the nucleus. The catalysed reaction is DNA(n) + a 2'-deoxyribonucleoside 5'-triphosphate = DNA(n+1) + diphosphate. This polymerase possesses two enzymatic activities: DNA synthesis (polymerase) and an exonucleolytic activity that degrades single-stranded DNA in the 3'- to 5'-direction. The chain is DNA polymerase delta catalytic subunit (POLD1) from Glycine max (Soybean).